The chain runs to 284 residues: uncharacterized protein (284 aa).

Residues 37 to 65 (NEKKLICFSIINGENCIYGPNCTYAHSLS) form a C3H1-type zinc finger.

This is an uncharacterized protein from Acanthamoeba polyphaga (Amoeba).